A 187-amino-acid polypeptide reads, in one-letter code: Calcium and integrin-binding family member 2 (187 aa).

3 consecutive EF-hand domains span residues 66-101 (RENPFKERIVAAFSEDGEGNLTFNDFVDMFSVLCES), 103-138 (PRELKANYAFKIYDFNTDNFICKEDLELTLARLTKS), and 144-179 (EVVLVCDKVIEEADLDGDGKLGFADFEDMIAKAPDF). Residues D116, N118, D120, D127, D157, D159, D161, K163, and D168 each coordinate Ca(2+).

In terms of assembly, monomer. Homodimer. Interacts with WHRN and MYO7A. Interacts with ITGA2B (via C-terminus cytoplasmic tail region); the interactions are stabilized/increased in a calcium and magnesium-dependent manner. Interacts with ITGA7 (via C-terminus cytoplasmic tail region); the interactions are stabilized/increased in a calcium and magnesium-dependent manner. Interacts with TMC1. Interacts with TMC2. Widely expressed.

It localises to the cytoplasm. Its subcellular location is the cell projection. The protein resides in the stereocilium. The protein localises to the photoreceptor inner segment. It is found in the cilium. It localises to the photoreceptor outer segment. Its subcellular location is the cell membrane. The protein resides in the sarcolemma. Calcium- and integrin-binding protein that plays a role in intracellular calcium homeostasis. Acts as an auxiliary subunit of the sensory mechanoelectrical transduction (MET) channel in hair cells. Essential for mechanoelectrical transduction (MET) currents in auditory hair cells and thereby required for hearing. Regulates the function of hair cell mechanotransduction by controlling the distribution of transmembrane channel-like proteins TMC1 and TMC2, and by regulating the function of the MET channels in hair cells. Required for the maintenance of auditory hair cell stereocilia bundle morphology and function and for hair-cell survival in the cochlea. Critical for proper photoreceptor cell maintenance and function. Plays a role in intracellular calcium homeostasis by decreasing ATP-induced calcium release. This is Calcium and integrin-binding family member 2 (CIB2) from Homo sapiens (Human).